The chain runs to 201 residues: 3-isopropylmalate dehydratase small subunit (201 aa).

This sequence belongs to the LeuD family. LeuD type 1 subfamily. As to quaternary structure, heterodimer of LeuC and LeuD.

It carries out the reaction (2R,3S)-3-isopropylmalate = (2S)-2-isopropylmalate. Its pathway is amino-acid biosynthesis; L-leucine biosynthesis; L-leucine from 3-methyl-2-oxobutanoate: step 2/4. Its function is as follows. Catalyzes the isomerization between 2-isopropylmalate and 3-isopropylmalate, via the formation of 2-isopropylmaleate. The sequence is that of 3-isopropylmalate dehydratase small subunit from Methylorubrum extorquens (strain ATCC 14718 / DSM 1338 / JCM 2805 / NCIMB 9133 / AM1) (Methylobacterium extorquens).